The following is a 593-amino-acid chain: Immunoglobulin G-binding protein G (593 aa).

The first 33 residues, methionine 1–alanine 33, serve as a signal peptide directing secretion. 5 tandem repeats follow at residues leucine 104–leucine 140, leucine 179–leucine 215, leucine 254–leucine 290, threonine 303–glutamate 357, and threonine 373–glutamate 427. The interval leucine 104–leucine 290 is 3 X 37 AA repeats. The interval threonine 303–glutamate 427 is 2 X 55 AA repeats. Positions proline 503–asparagine 567 are disordered. Residues alanine 529–glutamate 557 are compositionally biased toward basic and acidic residues. The tract at residues aspartate 531–lysine 555 is 5 X 5 AA repeats of [DE]-D-A-K-K. An LPXTG sorting signal motif is present at residues leucine 559 to glycine 563. Threonine 562 is subject to Pentaglycyl murein peptidoglycan amidated threonine. A propeptide spans glycine 563–aspartate 593 (removed by sortase).

It localises to the secreted. Its subcellular location is the cell wall. The sequence is that of Immunoglobulin G-binding protein G (spg) from Streptococcus sp. group G.